A 155-amino-acid polypeptide reads, in one-letter code: Ribosome maturation factor RimP (155 aa).

Belongs to the RimP family.

It localises to the cytoplasm. Its function is as follows. Required for maturation of 30S ribosomal subunits. This is Ribosome maturation factor RimP from Synechococcus sp. (strain WH7803).